Reading from the N-terminus, the 85-residue chain is Cell division topological specificity factor (85 aa).

The protein belongs to the MinE family.

Its function is as follows. Prevents the cell division inhibition by proteins MinC and MinD at internal division sites while permitting inhibition at polar sites. This ensures cell division at the proper site by restricting the formation of a division septum at the midpoint of the long axis of the cell. This Deinococcus geothermalis (strain DSM 11300 / CIP 105573 / AG-3a) protein is Cell division topological specificity factor.